The following is a 161-amino-acid chain: Regulator of ribonuclease activity A (161 aa).

Belongs to the RraA family. Homotrimer. Binds to both RNA-binding sites in the C-terminal region of Rne and to RhlB.

Its subcellular location is the cytoplasm. Its function is as follows. Globally modulates RNA abundance by binding to RNase E (Rne) and regulating its endonucleolytic activity. Can modulate Rne action in a substrate-dependent manner by altering the composition of the degradosome. Modulates RNA-binding and helicase activities of the degradosome. In Cronobacter sakazakii (strain ATCC BAA-894) (Enterobacter sakazakii), this protein is Regulator of ribonuclease activity A.